A 460-amino-acid polypeptide reads, in one-letter code: Dihydroorotate dehydrogenase (quinone), mitochondrial (460 aa).

Residues 1–32 (MAGRAATSSAKWAREFLFRRVSSNPLGATRNC) constitute a mitochondrion transit peptide. The helical transmembrane segment at 53-69 (ILTGATIGLAIAGGAYV) threads the bilayer. Residues 141 to 145 (AGFDK) and serine 165 each bind FMN. Substrate is bound at residue lysine 145. 190–194 (NRCGF) contacts substrate. Positions 213-245 (RMLAETSATSSSPSDDVKPGGKSGPGILGVNLG) are disordered. Positions 243 and 274 each coordinate FMN. 274-279 (NVSSPN) is a substrate binding site. Serine 277 (nucleophile) is an active-site residue. FMN is bound by residues lysine 319 and serine 347. Position 348 to 349 (348 to 349 (NT)) interacts with substrate. FMN is bound by residues glycine 371, glycine 400, and 421 to 422 (YT).

Belongs to the dihydroorotate dehydrogenase family. Type 2 subfamily. It depends on FMN as a cofactor.

Its subcellular location is the mitochondrion inner membrane. The catalysed reaction is (S)-dihydroorotate + a quinone = orotate + a quinol. It functions in the pathway pyrimidine metabolism; UMP biosynthesis via de novo pathway; orotate from (S)-dihydroorotate (quinone route): step 1/1. Its function is as follows. Catalyzes the conversion of dihydroorotate to orotate with quinone as electron acceptor. The protein is Dihydroorotate dehydrogenase (quinone), mitochondrial (PYRD) of Arabidopsis thaliana (Mouse-ear cress).